Here is a 260-residue protein sequence, read N- to C-terminus: UPF0328 protein ECU07_1870/ECU10_0030 (260 aa).

It belongs to the UPF0328 family.

The protein is UPF0328 protein ECU07_1870/ECU10_0030 of Encephalitozoon cuniculi (strain GB-M1) (Microsporidian parasite).